A 600-amino-acid polypeptide reads, in one-letter code: Proline--tRNA ligase (600 aa).

The protein belongs to the class-II aminoacyl-tRNA synthetase family. ProS type 1 subfamily. As to quaternary structure, homodimer.

The protein resides in the cytoplasm. It carries out the reaction tRNA(Pro) + L-proline + ATP = L-prolyl-tRNA(Pro) + AMP + diphosphate. Catalyzes the attachment of proline to tRNA(Pro) in a two-step reaction: proline is first activated by ATP to form Pro-AMP and then transferred to the acceptor end of tRNA(Pro). As ProRS can inadvertently accommodate and process non-cognate amino acids such as alanine and cysteine, to avoid such errors it has two additional distinct editing activities against alanine. One activity is designated as 'pretransfer' editing and involves the tRNA(Pro)-independent hydrolysis of activated Ala-AMP. The other activity is designated 'posttransfer' editing and involves deacylation of mischarged Ala-tRNA(Pro). The misacylated Cys-tRNA(Pro) is not edited by ProRS. The polypeptide is Proline--tRNA ligase (Acaryochloris marina (strain MBIC 11017)).